The primary structure comprises 423 residues: Serine hydroxymethyltransferase (423 aa).

Gly121 to Ile123 serves as a coordination point for (6S)-5,6,7,8-tetrahydrofolate. Lys227 is subject to N6-(pyridoxal phosphate)lysine. Glu242 provides a ligand contact to (6S)-5,6,7,8-tetrahydrofolate.

This sequence belongs to the SHMT family. As to quaternary structure, homodimer. The cofactor is pyridoxal 5'-phosphate.

The protein localises to the cytoplasm. The enzyme catalyses 5,10-methylenetetrahydromethanopterin + glycine + H2O = 5,6,7,8-tetrahydromethanopterin + L-serine. Its pathway is amino-acid biosynthesis; glycine biosynthesis; glycine from L-serine: step 1/1. Its function is as follows. Catalyzes the reversible interconversion of serine and glycine with tetrahydromethanopterin (H4MPT) serving as the one-carbon carrier. Cannot use tetrahydrofolate (THF or H4PteGlu) instead of H4MPT as the pteridine substrate. Also probably exhibits a pteridine-independent aldolase activity toward beta-hydroxyamino acids, producing glycine and aldehydes, via a retro-aldol mechanism. The protein is Serine hydroxymethyltransferase of Methanothermobacter thermautotrophicus (strain ATCC 29096 / DSM 1053 / JCM 10044 / NBRC 100330 / Delta H) (Methanobacterium thermoautotrophicum).